The chain runs to 457 residues: Phosphomethylpyrimidine synthase (457 aa).

Substrate contacts are provided by residues asparagine 88, methionine 117, tyrosine 146, histidine 182, 204–206 (SRG), 245–248 (DACR), and glutamate 284. Histidine 288 is a binding site for Zn(2+). Tyrosine 311 lines the substrate pocket. Histidine 352 serves as a coordination point for Zn(2+). Positions 428, 431, and 435 each coordinate [4Fe-4S] cluster.

Belongs to the ThiC family. [4Fe-4S] cluster is required as a cofactor.

The catalysed reaction is 5-amino-1-(5-phospho-beta-D-ribosyl)imidazole + S-adenosyl-L-methionine = 4-amino-2-methyl-5-(phosphooxymethyl)pyrimidine + CO + 5'-deoxyadenosine + formate + L-methionine + 3 H(+). It participates in cofactor biosynthesis; thiamine diphosphate biosynthesis. Its function is as follows. Catalyzes the synthesis of the hydroxymethylpyrimidine phosphate (HMP-P) moiety of thiamine from aminoimidazole ribotide (AIR) in a radical S-adenosyl-L-methionine (SAM)-dependent reaction. In Clostridium tetani (strain Massachusetts / E88), this protein is Phosphomethylpyrimidine synthase.